Consider the following 147-residue polypeptide: Large ribosomal subunit protein uL13 (147 aa).

The protein belongs to the universal ribosomal protein uL13 family. Part of the 50S ribosomal subunit.

This protein is one of the early assembly proteins of the 50S ribosomal subunit, although it is not seen to bind rRNA by itself. It is important during the early stages of 50S assembly. This chain is Large ribosomal subunit protein uL13, found in Arthrobacter sp. (strain FB24).